We begin with the raw amino-acid sequence, 320 residues long: Olfactory receptor 7C1 (320 aa).

Residues 1 to 25 (METGNQTHAQEFLLLGFSATSEIQF) are Extracellular-facing. A glycan (N-linked (GlcNAc...) asparagine) is linked at asparagine 5. Residues 26–46 (ILFGLFLSMYLVTFTGNLLII) traverse the membrane as a helical segment. At 47 to 54 (LAICSDSH) the chain is on the cytoplasmic side. Residues 55–75 (LHTPMYFFLSNLSFADLCFTS) traverse the membrane as a helical segment. Residues 76-99 (TTVPKMLLNILTQNKFITYAGCLS) lie on the Extracellular side of the membrane. A disulfide bridge links cysteine 97 with cysteine 189. The chain crosses the membrane as a helical span at residues 100–120 (QIFFFTSFGCLDNLLLTVMAY). The Cytoplasmic segment spans residues 121-139 (DRFVAVCHPLHYTVIMNPQ). A helical membrane pass occupies residues 140–160 (LCGLLVLGSWCISVMGSLLET). At 161 to 197 (LTVLRLSFCTEMEIPHFFCDLLEVLKLACSDTFINNV) the chain is on the extracellular side. A helical membrane pass occupies residues 198-217 (VIYFATGVLGVISFTGIFFS). Residues 218 to 237 (YYKIVFSILRISSAGRKHKA) are Cytoplasmic-facing. The chain crosses the membrane as a helical span at residues 238–258 (FSTCGSHLSVVTLFYGTGFGV). The Extracellular segment spans residues 259-271 (YLSSAATPSSRTS). Residues 272–292 (LVASVMYTMVTPMLNPFIYSL) traverse the membrane as a helical segment. Residues 293–313 (RNTDMKRALGRLLSRATFFNG) lie on the Cytoplasmic side of the membrane.

It belongs to the G-protein coupled receptor 1 family.

It is found in the cell membrane. Functionally, odorant receptor. The polypeptide is Olfactory receptor 7C1 (OR7C1) (Homo sapiens (Human)).